A 178-amino-acid polypeptide reads, in one-letter code: Crossover junction endodeoxyribonuclease RuvC (178 aa).

Residues Asp-18, Glu-78, and Asp-150 contribute to the active site. Asp-18, Glu-78, and Asp-150 together coordinate Mg(2+).

The protein belongs to the RuvC family. Homodimer which binds Holliday junction (HJ) DNA. The HJ becomes 2-fold symmetrical on binding to RuvC with unstacked arms; it has a different conformation from HJ DNA in complex with RuvA. In the full resolvosome a probable DNA-RuvA(4)-RuvB(12)-RuvC(2) complex forms which resolves the HJ. It depends on Mg(2+) as a cofactor.

Its subcellular location is the cytoplasm. The enzyme catalyses Endonucleolytic cleavage at a junction such as a reciprocal single-stranded crossover between two homologous DNA duplexes (Holliday junction).. Its function is as follows. The RuvA-RuvB-RuvC complex processes Holliday junction (HJ) DNA during genetic recombination and DNA repair. Endonuclease that resolves HJ intermediates. Cleaves cruciform DNA by making single-stranded nicks across the HJ at symmetrical positions within the homologous arms, yielding a 5'-phosphate and a 3'-hydroxyl group; requires a central core of homology in the junction. The consensus cleavage sequence is 5'-(A/T)TT(C/G)-3'. Cleavage occurs on the 3'-side of the TT dinucleotide at the point of strand exchange. HJ branch migration catalyzed by RuvA-RuvB allows RuvC to scan DNA until it finds its consensus sequence, where it cleaves and resolves the cruciform DNA. This is Crossover junction endodeoxyribonuclease RuvC from Granulibacter bethesdensis (strain ATCC BAA-1260 / CGDNIH1).